A 502-amino-acid polypeptide reads, in one-letter code: MANQDAAQHDENHLIAERRAKLAARRDQAAEAGGSAFPNDFRRDSLAAELQAELGDKDKAELETLDRRASVAGRIMRKRGPFIVIQDVSDQIQLYVDKKGLPAETLDDIKSWDIGDIVAARGPVHKSGKGDLYVMMGEAQLLTKSLRPLPDKYHGLTDTEARYRQRYVDLIMNPESRRVFEVRSRVISGIRRFLVERGFMEVETPMLQQIPGGATARPFVTHHNALDIDMYLRVAPELYLKRLVVGGFERVFEINRNFRNEGLSTRHNPEFTMLEFYWAYADYRDLLDLTEAMIRDVAHEVLGTTTVEYQGARYELGEPFQRLTLRQSILEYGDGLGESDIDTFDGARATCERLGIPVKPSWGLGKLQTEIFEAVAEDKLDRPTFITEYPAEVSPLARRNDTNPHVTDRFEFFVGGRELANGFSELNDAEDQAERFAAQAAEKDAGDLEAMYYDADYVRALEYGMPPTAGEGIGIDRLVMLLTDSPSIRDVLLFPAMRPSAD.

Mg(2+) is bound by residues Glu-411 and Glu-418.

The protein belongs to the class-II aminoacyl-tRNA synthetase family. Homodimer. Mg(2+) is required as a cofactor.

It is found in the cytoplasm. It catalyses the reaction tRNA(Lys) + L-lysine + ATP = L-lysyl-tRNA(Lys) + AMP + diphosphate. This Chromohalobacter salexigens (strain ATCC BAA-138 / DSM 3043 / CIP 106854 / NCIMB 13768 / 1H11) protein is Lysine--tRNA ligase.